We begin with the raw amino-acid sequence, 362 residues long: Alanine racemase (362 aa).

Lys-35 acts as the Proton acceptor; specific for D-alanine in catalysis. At Lys-35 the chain carries N6-(pyridoxal phosphate)lysine. Residue Arg-130 participates in substrate binding. Tyr-257 functions as the Proton acceptor; specific for L-alanine in the catalytic mechanism. Residue Met-305 participates in substrate binding.

Belongs to the alanine racemase family. Requires pyridoxal 5'-phosphate as cofactor.

It carries out the reaction L-alanine = D-alanine. It functions in the pathway amino-acid biosynthesis; D-alanine biosynthesis; D-alanine from L-alanine: step 1/1. Catalyzes the interconversion of L-alanine and D-alanine. May also act on other amino acids. This chain is Alanine racemase (alr), found in Nitrosomonas europaea (strain ATCC 19718 / CIP 103999 / KCTC 2705 / NBRC 14298).